An 83-amino-acid polypeptide reads, in one-letter code: Small ribosomal subunit protein bS16 (83 aa).

It belongs to the bacterial ribosomal protein bS16 family.

This is Small ribosomal subunit protein bS16 from Pseudomonas entomophila (strain L48).